A 268-amino-acid chain; its full sequence is Tryptophan synthase alpha chain (268 aa).

Residues Glu-49 and Asp-60 each act as proton acceptor in the active site.

This sequence belongs to the TrpA family. In terms of assembly, tetramer of two alpha and two beta chains.

It catalyses the reaction (1S,2R)-1-C-(indol-3-yl)glycerol 3-phosphate + L-serine = D-glyceraldehyde 3-phosphate + L-tryptophan + H2O. The protein operates within amino-acid biosynthesis; L-tryptophan biosynthesis; L-tryptophan from chorismate: step 5/5. Functionally, the alpha subunit is responsible for the aldol cleavage of indoleglycerol phosphate to indole and glyceraldehyde 3-phosphate. This Citrobacter koseri (strain ATCC BAA-895 / CDC 4225-83 / SGSC4696) protein is Tryptophan synthase alpha chain.